Here is a 344-residue protein sequence, read N- to C-terminus: MDTNKQKALDLAIKQIDKAFGKGALVKLGDKQIEPIESISTGSLGLDLALGIGGVPKGRIVEIYGPESSGKTTLALQIIAEAQKKGGVAAFIDAEHALDVLYAKNLGVDIDNLLVSQPDFGEQALDIVETIARSGAVDVIVIDSVAALTPKAEIEGEMGDSHMGLQARLMSQALRKLTGVVHKMDTTVIFINQIRMKIGAMGYGTPETTTGGNALKFYASVRVDVRRIATLKQGESQIGNRVRAKVVKNKVAPPFRQAEFDIMFGEGISKEGELIDYGVKMDIIDKSGSWFSYKDIKLGQGRENAKAYLKEHPEVAQEIENEIRRAMGMDDSVMMVPENEMSEE.

65 to 72 (GPESSGKT) contributes to the ATP binding site.

Belongs to the RecA family.

It localises to the cytoplasm. In terms of biological role, can catalyze the hydrolysis of ATP in the presence of single-stranded DNA, the ATP-dependent uptake of single-stranded DNA by duplex DNA, and the ATP-dependent hybridization of homologous single-stranded DNAs. It interacts with LexA causing its activation and leading to its autocatalytic cleavage. This Nitratiruptor sp. (strain SB155-2) protein is Protein RecA.